Here is a 371-residue protein sequence, read N- to C-terminus: Cytochrome b (371 aa).

Helical transmembrane passes span 25–45 (FGSM…FLAV), 69–90 (WIMQ…YIHI), 105–125 (WLSG…GYVL), and 170–190 (FFAL…IHII). Heme b-binding residues include His-75 and His-89. Heme b-binding residues include His-174 and His-188. His-193 contacts a ubiquinone. 4 helical membrane passes run 218-238 (YKDM…LSFM), 280-300 (LGGT…PFTH), 312-332 (LTQA…WTAT), and 339-358 (FTLI…IINP).

This sequence belongs to the cytochrome b family. In terms of assembly, the cytochrome bc1 complex contains 3 respiratory subunits (MT-CYB, CYC1 and UQCRFS1), 2 core proteins (UQCRC1 and UQCRC2) and probably 6 low-molecular weight proteins. Requires heme b as cofactor.

The protein localises to the mitochondrion inner membrane. Its function is as follows. Component of the ubiquinol-cytochrome c reductase complex (complex III or cytochrome b-c1 complex) that is part of the mitochondrial respiratory chain. The b-c1 complex mediates electron transfer from ubiquinol to cytochrome c. Contributes to the generation of a proton gradient across the mitochondrial membrane that is then used for ATP synthesis. This Toxicocalamus preussi (Preuss's forest snake) protein is Cytochrome b (MT-CYB).